We begin with the raw amino-acid sequence, 236 residues long: tRNA1(Val) (adenine(37)-N6)-methyltransferase (236 aa).

This sequence belongs to the methyltransferase superfamily. tRNA (adenine-N(6)-)-methyltransferase family.

It localises to the cytoplasm. It carries out the reaction adenosine(37) in tRNA1(Val) + S-adenosyl-L-methionine = N(6)-methyladenosine(37) in tRNA1(Val) + S-adenosyl-L-homocysteine + H(+). Its function is as follows. Specifically methylates the adenine in position 37 of tRNA(1)(Val) (anticodon cmo5UAC). The sequence is that of tRNA1(Val) (adenine(37)-N6)-methyltransferase from Actinobacillus pleuropneumoniae serotype 5b (strain L20).